Consider the following 266-residue polypeptide: Glutamate racemase (266 aa).

Residues Asp-9 to Ser-10 and Tyr-41 to Gly-42 each bind substrate. Residue Cys-72 is the Proton donor/acceptor of the active site. Asn-73–Thr-74 is a substrate binding site. The Proton donor/acceptor role is filled by Cys-184. Substrate is bound at residue Thr-185–His-186.

It belongs to the aspartate/glutamate racemases family.

The enzyme catalyses L-glutamate = D-glutamate. It participates in cell wall biogenesis; peptidoglycan biosynthesis. Provides the (R)-glutamate required for cell wall biosynthesis. The sequence is that of Glutamate racemase from Staphylococcus carnosus (strain TM300).